The primary structure comprises 65 residues: Putative beta-neurotoxin RjAa4 (65 aa).

The 64-residue stretch at 1-64 (KEGYPMGRDG…VWDSSTNKCG (64 aa)) folds into the LCN-type CS-alpha/beta domain. Cystine bridges form between Cys-11/Cys-63, Cys-15/Cys-37, Cys-22/Cys-44, and Cys-26/Cys-46.

The protein belongs to the long (4 C-C) scorpion toxin superfamily. Sodium channel inhibitor family. Beta subfamily. In terms of tissue distribution, expressed by the venom gland.

The protein localises to the secreted. Its function is as follows. Beta toxins bind voltage-independently at site-4 of sodium channels (Nav) and shift the voltage of activation toward more negative potentials thereby affecting sodium channel activation and promoting spontaneous and repetitive firing. The sequence is that of Putative beta-neurotoxin RjAa4 from Rhopalurus junceus (Caribbean blue scorpion).